The primary structure comprises 427 residues: C4-dicarboxylate TRAP transporter large permease protein DctM (427 aa).

13 helical membrane-spanning segments follow: residues threonine 2–valine 22, threonine 55–alanine 75, glycine 91–serine 111, valine 115–phenylalanine 135, glycine 138–valine 158, phenylalanine 171–isoleucine 191, alanine 216–threonine 236, proline 237–arginine 257, leucine 274–threonine 294, leucine 310–methionine 330, isoleucine 335–isoleucine 355, isoleucine 359–phenylalanine 379, and alanine 396–valine 416.

It belongs to the TRAP transporter large permease family. In terms of assembly, the complex comprises the extracytoplasmic solute receptor protein DctP, and the two transmembrane proteins DctQ and DctM.

It is found in the cell inner membrane. Functionally, part of the tripartite ATP-independent periplasmic (TRAP) transport system DctPQM involved in C4-dicarboxylates uptake. This chain is C4-dicarboxylate TRAP transporter large permease protein DctM, found in Pseudomonas aeruginosa (strain ATCC 15692 / DSM 22644 / CIP 104116 / JCM 14847 / LMG 12228 / 1C / PRS 101 / PAO1).